We begin with the raw amino-acid sequence, 264 residues long: Cancer/testis antigen 55 (264 aa).

The tract at residues 242 to 264 (SSSGFQDDGGLGRPKRERRSQSI) is disordered. Basic residues predominate over residues 254 to 264 (RPKRERRSQSI).

In terms of assembly, interacts with GABARAP; this interaction may be important for GABARAP protein stability. Isoform 1 interacts with LAMP2; this interaction may be important for LAMP2 protein stability. Testis-specific. Expressed in spermatozoa (at protein level).

It localises to the cytoplasm. Its subcellular location is the cytoplasmic vesicle. It is found in the secretory vesicle. The protein resides in the acrosome. The protein localises to the cell projection. It localises to the cilium. Its subcellular location is the flagellum. In terms of biological role, plays a role in spermatogenesis, possibly acting in the regulation of the autophagy pathway. This Homo sapiens (Human) protein is Cancer/testis antigen 55 (CT55).